Reading from the N-terminus, the 354-residue chain is Uroporphyrinogen decarboxylase (354 aa).

Residues 27 to 31 (RQAGR), Asp-77, Tyr-153, Thr-208, and His-326 each bind substrate.

Belongs to the uroporphyrinogen decarboxylase family. In terms of assembly, homodimer.

It localises to the cytoplasm. The enzyme catalyses uroporphyrinogen III + 4 H(+) = coproporphyrinogen III + 4 CO2. The protein operates within porphyrin-containing compound metabolism; protoporphyrin-IX biosynthesis; coproporphyrinogen-III from 5-aminolevulinate: step 4/4. Functionally, catalyzes the decarboxylation of four acetate groups of uroporphyrinogen-III to yield coproporphyrinogen-III. This is Uroporphyrinogen decarboxylase from Neisseria meningitidis serogroup C / serotype 2a (strain ATCC 700532 / DSM 15464 / FAM18).